Consider the following 245-residue polypeptide: tRNA pseudouridine synthase A (245 aa).

Aspartate 52 serves as the catalytic Nucleophile. Residue tyrosine 111 coordinates substrate.

This sequence belongs to the tRNA pseudouridine synthase TruA family. As to quaternary structure, homodimer.

It catalyses the reaction uridine(38/39/40) in tRNA = pseudouridine(38/39/40) in tRNA. Functionally, formation of pseudouridine at positions 38, 39 and 40 in the anticodon stem and loop of transfer RNAs. In Thermotoga maritima (strain ATCC 43589 / DSM 3109 / JCM 10099 / NBRC 100826 / MSB8), this protein is tRNA pseudouridine synthase A.